The following is a 100-amino-acid chain: NADH-quinone oxidoreductase subunit K (100 aa).

The next 3 helical transmembrane spans lie at 4 to 24 (LSHA…AIIV), 29 to 49 (LFIL…FVIV), and 60 to 80 (IMYI…LALL).

Belongs to the complex I subunit 4L family. In terms of assembly, NDH-1 is composed of 13 different subunits. Subunits NuoA, H, J, K, L, M, N constitute the membrane sector of the complex.

It is found in the cell inner membrane. It catalyses the reaction a quinone + NADH + 5 H(+)(in) = a quinol + NAD(+) + 4 H(+)(out). NDH-1 shuttles electrons from NADH, via FMN and iron-sulfur (Fe-S) centers, to quinones in the respiratory chain. The immediate electron acceptor for the enzyme in this species is believed to be ubiquinone. Couples the redox reaction to proton translocation (for every two electrons transferred, four hydrogen ions are translocated across the cytoplasmic membrane), and thus conserves the redox energy in a proton gradient. The sequence is that of NADH-quinone oxidoreductase subunit K from Blochmanniella pennsylvanica (strain BPEN).